The primary structure comprises 122 residues: Holo-[acyl-carrier-protein] synthase (122 aa).

Residues Asp-8 and Glu-57 each contribute to the Mg(2+) site.

The protein belongs to the P-Pant transferase superfamily. AcpS family. It depends on Mg(2+) as a cofactor.

It localises to the cytoplasm. The enzyme catalyses apo-[ACP] + CoA = holo-[ACP] + adenosine 3',5'-bisphosphate + H(+). Its function is as follows. Transfers the 4'-phosphopantetheine moiety from coenzyme A to a Ser of acyl-carrier-protein. The protein is Holo-[acyl-carrier-protein] synthase of Exiguobacterium sp. (strain ATCC BAA-1283 / AT1b).